Reading from the N-terminus, the 156-residue chain is ATP synthase subunit b (156 aa).

The chain crosses the membrane as a helical span at residues 7–29; the sequence is LIGQSLTFIAFILFCMKYVWPQL.

This sequence belongs to the ATPase B chain family. F-type ATPases have 2 components, F(1) - the catalytic core - and F(0) - the membrane proton channel. F(1) has five subunits: alpha(3), beta(3), gamma(1), delta(1), epsilon(1). F(0) has three main subunits: a(1), b(2) and c(10-14). The alpha and beta chains form an alternating ring which encloses part of the gamma chain. F(1) is attached to F(0) by a central stalk formed by the gamma and epsilon chains, while a peripheral stalk is formed by the delta and b chains.

The protein localises to the cell inner membrane. F(1)F(0) ATP synthase produces ATP from ADP in the presence of a proton or sodium gradient. F-type ATPases consist of two structural domains, F(1) containing the extramembraneous catalytic core and F(0) containing the membrane proton channel, linked together by a central stalk and a peripheral stalk. During catalysis, ATP synthesis in the catalytic domain of F(1) is coupled via a rotary mechanism of the central stalk subunits to proton translocation. In terms of biological role, component of the F(0) channel, it forms part of the peripheral stalk, linking F(1) to F(0). This Saccharophagus degradans (strain 2-40 / ATCC 43961 / DSM 17024) protein is ATP synthase subunit b.